We begin with the raw amino-acid sequence, 543 residues long: Rop guanine nucleotide exchange factor 11 (543 aa).

The disordered stretch occupies residues 61 to 89; it reads QPGKCGSVDRPSLPIGGVTPNRNDKLPRV. Residues 95-456 enclose the PRONE domain; the sequence is MEALIILQAA…QLTQEPTNNA (362 aa).

Interacts with ARAC4/ROP2, ARAC3/ROP, ARAC9/ROP8, PHYA and PHYB. Highly expressed in elongating regions of roots and pollen grains. Expressed in flowers, and at lower levels in leaves and stems.

It is found in the cytoplasm. Its function is as follows. Guanine-nucleotide exchange factor (GEF) that acts as an activator of Rop (Rho of plants) GTPases by promoting the exchange of GDP for GTP. Functions as a light-signaling switch that functions in root growth and development through the activation of Rop in a phytochrome-dependent manner. May act as a negative regulator of phytochrome-mediated primary root development. In Arabidopsis thaliana (Mouse-ear cress), this protein is Rop guanine nucleotide exchange factor 11 (ROPGEF11).